The sequence spans 486 residues: UDP-N-acetylmuramate--L-alanine ligase (486 aa).

Position 129–135 (129–135 (GTHGKTT)) interacts with ATP.

It belongs to the MurCDEF family.

The protein resides in the cytoplasm. The enzyme catalyses UDP-N-acetyl-alpha-D-muramate + L-alanine + ATP = UDP-N-acetyl-alpha-D-muramoyl-L-alanine + ADP + phosphate + H(+). Its pathway is cell wall biogenesis; peptidoglycan biosynthesis. Cell wall formation. In Vibrio atlanticus (strain LGP32) (Vibrio splendidus (strain Mel32)), this protein is UDP-N-acetylmuramate--L-alanine ligase.